Reading from the N-terminus, the 347-residue chain is Hyaluronidase conohyal-ad1 (347 aa).

The first 18 residues, 1 to 18 (MRAVVVVTGLVVVVVTTT), serve as a signal peptide directing secretion. Residues 19-33 (LSLQDHDVKSASSPL) constitute a propeptide that is removed on maturation. The disordered stretch occupies residues 27–49 (KSASSPLSSSVDQGSSGDDCDEG). Positions 28-43 (SASSPLSSSVDQGSSG) are enriched in low complexity. C67 and C343 are oxidised to a cystine. E150 (proton donor) is an active-site residue.

Belongs to the glycosyl hydrolase 56 family. Contains 4 disulfide bonds. In terms of processing, is N-linked glycosylated at three positions. As to expression, expressed by the venom duct.

It is found in the secreted. It carries out the reaction Random hydrolysis of (1-&gt;4)-linkages between N-acetyl-beta-D-glucosamine and D-glucuronate residues in hyaluronate.. Functionally, hyaluronidase catalyzes the hydrolysis of hyaluronic acid (HA), an anionic, nonsulfated glycosaminoglycan distributed widely throughout connective, epithelial, and neural tissues. In venom, they are known to enhance diffusion of the venom by degrading the extracellular matrix. The chain is Hyaluronidase conohyal-ad1 from Conus adamsonii (Rhododendron cone).